Consider the following 886-residue polypeptide: Peptidyl-lysine N-acetyltransferase PatZ (886 aa).

Residues Gln487–Lys523 form the ATP-grasp domain. The N-acetyltransferase domain occupies Cys726 to Ala881.

This sequence in the N-terminal section; belongs to the acetate CoA ligase alpha subunit family. The protein in the central section; belongs to the acetate CoA ligase beta subunit family. As to quaternary structure, stable tetramer in solution. Oligomerizes to an octameric form by autoacetylation. Post-translationally, autoacetylated. Deacetylated by CobB.

The enzyme catalyses L-lysyl-[protein] + acetyl-CoA = N(6)-acetyl-L-lysyl-[protein] + CoA + H(+). Its function is as follows. Catalyzes the acetyl-CoA-dependent acetylation of lysine residues of a large number of target proteins. Acetylates RNase R in exponential phase cells and RNase II. Required for the glucose-dependent acetylation on multiple lysines of alpha, beta and beta' RNAP subunits. Also acetylates acetyl-coenzyme A synthetase (Acs) and the chromosomal replication initiator protein DnaA, and inhibits their activity. Overexpression leads to the acetylation of a large number of additional proteins and inhibits motility. In Escherichia coli (strain K12), this protein is Peptidyl-lysine N-acetyltransferase PatZ.